Here is a 214-residue protein sequence, read N- to C-terminus: MADS-box protein SOC1 (214 aa).

In terms of domain architecture, MADS-box spans 3-57 (RGKTQMKRIENATSRQVTFSKRRNGLLKKAFELSVLCDAEVSLIIFSPKGKLYEF). Residues 87–177 (MQHLKYEAAN…SEKWGSHESE (91 aa)) enclose the K-box domain. Residues 162–177 (AENEKLSEKWGSHESE) are compositionally biased toward basic and acidic residues. Residues 162–214 (AENEKLSEKWGSHESEVWSNKNQESTGRGDEESSPSSEVETQLFIGLPCSSRK) are disordered. The span at 178–187 (VWSNKNQEST) shows a compositional bias: polar residues.

Forms a heterodimer with AGL24 through MADS-box domain. Interacts with AGL15, AGL16 and AGL19. Interacts with OXS3 in the nucleus. As to expression, widely expressed. Not found in the apical meristem of short-day grown plants in vegetative stage.

It localises to the nucleus. It is found in the cytoplasm. Its function is as follows. Transcription activator active in flowering time control. May integrate signals from the photoperiod, vernalization and autonomous floral induction pathways. Can modulate class B and C homeotic genes expression. When associated with AGL24, mediates effect of gibberellins on flowering under short-day conditions, and regulates the expression of LEAFY (LFY), which links floral induction and floral development. The chain is MADS-box protein SOC1 from Arabidopsis thaliana (Mouse-ear cress).